The primary structure comprises 442 residues: MNVTETLNEGLKRGYSITVTAAELDAKVNEKLSEAQPEIEMKGFRKGKVPMALLKKQFGQKLLGEAMQETIDGAMAKHFEDSGDRPALQPEIKMTNEDWKEGDDIEVAMSYEALPEVPDTDFSTVTLEKLVVKADEEAVNEALQNLAENAKSFETKEGAAEDGDQVVIDFLGKVDGEAFEGGAAEDYPLVLGSNSFIPGFEEQLIGTSAGEEKNVDVSFPEQYQAEHLAGKAAVFECKIKEVKAPKAAEIDDEMAKQFGAEDLETLKGQISERLEAEYAGAARAVMKRKLLDELDTLVKFELPPSLVATEAGQIAHQLWHEENPEVEGHDHPEIEPTEEHNKLAERRVRLGLLLAELGQKNEIQVTDAEMTQAIMAQARQYPGQERQFFEFIQQNQQMQQQLRAPIFEDKVVDYIFELATVTEKEISKDDLQKAVEALDDEV.

The 86-residue stretch at 163 to 248 folds into the PPIase FKBP-type domain; the sequence is GDQVVIDFLG…IKEVKAPKAA (86 aa).

The protein belongs to the FKBP-type PPIase family. Tig subfamily.

The protein localises to the cytoplasm. The enzyme catalyses [protein]-peptidylproline (omega=180) = [protein]-peptidylproline (omega=0). Its function is as follows. Involved in protein export. Acts as a chaperone by maintaining the newly synthesized protein in an open conformation. Functions as a peptidyl-prolyl cis-trans isomerase. This is Trigger factor from Dinoroseobacter shibae (strain DSM 16493 / NCIMB 14021 / DFL 12).